A 144-amino-acid chain; its full sequence is Cell division protein SepF (144 aa).

Residues 16–42 (DEMNEAPYTEAEQQEEEVPQAQKNERR) are disordered.

It belongs to the SepF family. As to quaternary structure, homodimer. Interacts with FtsZ.

It is found in the cytoplasm. Functionally, cell division protein that is part of the divisome complex and is recruited early to the Z-ring. Probably stimulates Z-ring formation, perhaps through the cross-linking of FtsZ protofilaments. Its function overlaps with FtsA. The sequence is that of Cell division protein SepF from Lactobacillus gasseri (strain ATCC 33323 / DSM 20243 / BCRC 14619 / CIP 102991 / JCM 1131 / KCTC 3163 / NCIMB 11718 / NCTC 13722 / AM63).